A 225-amino-acid polypeptide reads, in one-letter code: Uridylate kinase (225 aa).

Residue 9-10 (GS) participates in ATP binding. Gly44 serves as a coordination point for UMP. 2 residues coordinate ATP: Gly45 and Arg49. Residues Asp66 and 114–120 (THPGHTT) each bind UMP. ATP contacts are provided by Thr140, Asn141, Tyr146, and Asp149.

Belongs to the UMP kinase family. Homohexamer.

The protein localises to the cytoplasm. The enzyme catalyses UMP + ATP = UDP + ADP. It functions in the pathway pyrimidine metabolism; CTP biosynthesis via de novo pathway; UDP from UMP (UMPK route): step 1/1. With respect to regulation, inhibited by UTP. In terms of biological role, catalyzes the reversible phosphorylation of UMP to UDP. The chain is Uridylate kinase from Thermococcus onnurineus (strain NA1).